The chain runs to 65 residues: MPKMKTHRGAAKRFSKTGTGKIKMAHAFTSHILTSKTRKNKRNLRKGGIVAASDHKNISCLIPYK.

It belongs to the bacterial ribosomal protein bL35 family.

This Geobacter sp. (strain M21) protein is Large ribosomal subunit protein bL35.